The chain runs to 202 residues: ATP-dependent Clp protease proteolytic subunit (202 aa).

The active-site Nucleophile is serine 98. Residue histidine 123 is part of the active site.

Belongs to the peptidase S14 family. As to quaternary structure, fourteen ClpP subunits assemble into 2 heptameric rings which stack back to back to give a disk-like structure with a central cavity, resembling the structure of eukaryotic proteasomes.

The protein resides in the cytoplasm. It carries out the reaction Hydrolysis of proteins to small peptides in the presence of ATP and magnesium. alpha-casein is the usual test substrate. In the absence of ATP, only oligopeptides shorter than five residues are hydrolyzed (such as succinyl-Leu-Tyr-|-NHMec, and Leu-Tyr-Leu-|-Tyr-Trp, in which cleavage of the -Tyr-|-Leu- and -Tyr-|-Trp bonds also occurs).. In terms of biological role, cleaves peptides in various proteins in a process that requires ATP hydrolysis. Has a chymotrypsin-like activity. Plays a major role in the degradation of misfolded proteins. The chain is ATP-dependent Clp protease proteolytic subunit from Solidesulfovibrio magneticus (strain ATCC 700980 / DSM 13731 / RS-1) (Desulfovibrio magneticus).